The sequence spans 573 residues: 2-succinyl-5-enolpyruvyl-6-hydroxy-3-cyclohexene-1-carboxylate synthase (573 aa).

This sequence belongs to the TPP enzyme family. MenD subfamily. Homodimer. Mg(2+) serves as cofactor. Requires Mn(2+) as cofactor. The cofactor is thiamine diphosphate.

The enzyme catalyses isochorismate + 2-oxoglutarate + H(+) = 5-enolpyruvoyl-6-hydroxy-2-succinyl-cyclohex-3-ene-1-carboxylate + CO2. The protein operates within quinol/quinone metabolism; 1,4-dihydroxy-2-naphthoate biosynthesis; 1,4-dihydroxy-2-naphthoate from chorismate: step 2/7. It participates in quinol/quinone metabolism; menaquinone biosynthesis. Functionally, catalyzes the thiamine diphosphate-dependent decarboxylation of 2-oxoglutarate and the subsequent addition of the resulting succinic semialdehyde-thiamine pyrophosphate anion to isochorismate to yield 2-succinyl-5-enolpyruvyl-6-hydroxy-3-cyclohexene-1-carboxylate (SEPHCHC). This Shewanella oneidensis (strain ATCC 700550 / JCM 31522 / CIP 106686 / LMG 19005 / NCIMB 14063 / MR-1) protein is 2-succinyl-5-enolpyruvyl-6-hydroxy-3-cyclohexene-1-carboxylate synthase.